A 1191-amino-acid chain; its full sequence is DNA-directed RNA polymerase II subunit RPB2 (1191 aa).

D799 contributes to the Mg(2+) binding site. The segment at 842–903 (ASTMGMRHGS…RKDHSTSLRH (62 aa)) is disordered. Residues 878 to 891 (TPISQDDAQGQASR) show a composition bias toward polar residues. Residues 893–903 (TRKDHSTSLRH) show a composition bias toward basic and acidic residues. C1123, C1126, C1141, and C1144 together coordinate Zn(2+). The C4-type zinc-finger motif lies at 1123–1144 (CERCGLIAIANLKKNSFECRGC).

Belongs to the RNA polymerase beta chain family. Component of the RNA polymerase II (Pol II) complex consisting of 12 subunits.

It is found in the nucleus. It catalyses the reaction RNA(n) + a ribonucleoside 5'-triphosphate = RNA(n+1) + diphosphate. In terms of biological role, DNA-dependent RNA polymerase catalyzes the transcription of DNA into RNA using the four ribonucleoside triphosphates as substrates. Second largest component of RNA polymerase II which synthesizes mRNA precursors and many functional non-coding RNAs. Proposed to contribute to the polymerase catalytic activity and forms the polymerase active center together with the largest subunit. Pol II is the central component of the basal RNA polymerase II transcription machinery. It is composed of mobile elements that move relative to each other. RPB2 is part of the core element with the central large cleft, the clamp element that moves to open and close the cleft and the jaws that are thought to grab the incoming DNA template. The protein is DNA-directed RNA polymerase II subunit RPB2 (RPB2) of Solanum lycopersicum (Tomato).